The chain runs to 424 residues: Interleukin-13 receptor subunit alpha-1 (424 aa).

A signal peptide spans 1 to 25 (MARPALLGELLVLLLWTATVGQVAA). The Extracellular portion of the chain corresponds to 26-340 (ATEVQPPVTN…QSIGKEQNST (315 aa)). Residues 32-121 (PVTNLSVSVE…VKKCISPPEG (90 aa)) form the Fibronectin type-III 1 domain. Residues asparagine 35, asparagine 59, asparagine 103, and asparagine 136 are each glycosylated (N-linked (GlcNAc...) asparagine). The cysteines at positions 44 and 93 are disulfide-linked. 2 cysteine pairs are disulfide-bonded: cysteine 132–cysteine 142 and cysteine 171–cysteine 183. Residues 224 to 336 (KPDPPHIKHL…WSEAQSIGKE (113 aa)) form the Fibronectin type-III 2 domain. An N-linked (GlcNAc...) asparagine glycan is attached at asparagine 262. The WSXWS motif motif lies at 324–328 (WSDWS). A glycan (N-linked (GlcNAc...) asparagine) is linked at asparagine 338. A helical transmembrane segment spans residues 341 to 364 (FYTTMLLTIPVFVAVAVIILLFYL). The Cytoplasmic portion of the chain corresponds to 365 to 424 (KRLKIIIFPPIPDPGKIFKEMFGDQNDDTLHWKKYDIYEKQSKEETDSVVLIENLKKAAP). The Box 1 motif signature appears at 371–379 (IFPPIPDPG).

It belongs to the type I cytokine receptor family. Type 5 subfamily. In terms of assembly, interleukin-13 receptor is a complex of IL4R, IL13RA1, and possibly other components. Interacts with TRAF3IP1. Interacts with IL4. Spleen, liver, thymus, heart, lung, kidney, testis, stomach, brain, skin, and colon; but not skeletal muscle.

Its subcellular location is the membrane. Its function is as follows. Binds with low affinity to interleukin-13 (IL13). Together with IL4RA can form a functional receptor for IL13. Also serves as an alternate accessory protein to the common cytokine receptor gamma chain for interleukin-4 (IL4) signaling, but cannot replace the function of IL2RG in allowing enhanced interleukin-2 (IL2) binding activity. The protein is Interleukin-13 receptor subunit alpha-1 (Il13ra1) of Mus musculus (Mouse).